Here is a 304-residue protein sequence, read N- to C-terminus: Methionyl-tRNA formyltransferase (304 aa).

111-114 (SLLP) contacts (6S)-5,6,7,8-tetrahydrofolate.

The protein belongs to the Fmt family.

The enzyme catalyses L-methionyl-tRNA(fMet) + (6R)-10-formyltetrahydrofolate = N-formyl-L-methionyl-tRNA(fMet) + (6S)-5,6,7,8-tetrahydrofolate + H(+). Functionally, attaches a formyl group to the free amino group of methionyl-tRNA(fMet). The formyl group appears to play a dual role in the initiator identity of N-formylmethionyl-tRNA by promoting its recognition by IF2 and preventing the misappropriation of this tRNA by the elongation apparatus. The polypeptide is Methionyl-tRNA formyltransferase (Campylobacter fetus subsp. fetus (strain 82-40)).